The sequence spans 202 residues: Acireductone dioxygenase (202 aa).

Fe(2+)-binding residues include H110, H112, E116, and H154. H110, H112, E116, and H154 together coordinate Ni(2+).

Belongs to the acireductone dioxygenase (ARD) family. Monomer. The cofactor is Fe(2+). It depends on Ni(2+) as a cofactor.

The enzyme catalyses 1,2-dihydroxy-5-(methylsulfanyl)pent-1-en-3-one + O2 = 3-(methylsulfanyl)propanoate + CO + formate + 2 H(+). It carries out the reaction 1,2-dihydroxy-5-(methylsulfanyl)pent-1-en-3-one + O2 = 4-methylsulfanyl-2-oxobutanoate + formate + 2 H(+). It functions in the pathway amino-acid biosynthesis; L-methionine biosynthesis via salvage pathway; L-methionine from S-methyl-5-thio-alpha-D-ribose 1-phosphate: step 5/6. Its function is as follows. Catalyzes 2 different reactions between oxygen and the acireductone 1,2-dihydroxy-3-keto-5-methylthiopentene (DHK-MTPene) depending upon the metal bound in the active site. Fe-containing acireductone dioxygenase (Fe-ARD) produces formate and 2-keto-4-methylthiobutyrate (KMTB), the alpha-ketoacid precursor of methionine in the methionine recycle pathway. Ni-containing acireductone dioxygenase (Ni-ARD) produces methylthiopropionate, carbon monoxide and formate, and does not lie on the methionine recycle pathway. The sequence is that of Acireductone dioxygenase from Synechococcus sp. (strain CC9311).